The sequence spans 60 residues: Hemocyte defensin Cg-Defh1 (60 aa).

Residues 1 to 17 form the signal peptide; that stretch reads LFTLVVLLMVSADMAFA. Beta-D-GlcNAc-(1-&gt;4)-Mur2Ac(oyl-L-Ala-gamma-D-Glu-L-Lys-D-Ala-D-Ala)-di-trans,octa-cis-undecaprenyl diphosphate contacts are provided by F19, G20, and C21. Cystine bridges form between C21/C42, C28/C51, C32/C53, and C37/C56. Positions 22–25 are binds to membrane interface; the sequence is PRDQ. H31 is a beta-D-GlcNAc-(1-&gt;4)-Mur2Ac(oyl-L-Ala-gamma-D-Glu-L-Lys-D-Ala-D-Ala)-di-trans,octa-cis-undecaprenyl diphosphate binding site. Residues 43-49 are binds to membrane interface; that stretch reads DAVTLWL. C51 contacts beta-D-GlcNAc-(1-&gt;4)-Mur2Ac(oyl-L-Ala-gamma-D-Glu-L-Lys-D-Ala-D-Ala)-di-trans,octa-cis-undecaprenyl diphosphate.

The protein belongs to the invertebrate defensin family. As to expression, expressed in hemocytes.

The protein resides in the secreted. Its subcellular location is the target cell membrane. Its function is as follows. Antibacterial peptide mostly active against Gram-positive bacteria. It acts by selectively inhibiting peptidoglycan biosynthesis through complex formation with the cell wall precursor lipid II (1:1 molar ratio) thus inhibiting cell wall synthesis. It does not disrupt cell membranes. Is noticeably less potent than Cg-Defh2 and Cg-Defm. Shows no or limited activities against Gram-negative bacteria. This chain is Hemocyte defensin Cg-Defh1, found in Magallana gigas (Pacific oyster).